We begin with the raw amino-acid sequence, 140 residues long: Phosphatidylinositol N-acetylglucosaminyltransferase subunit GPI19 (140 aa).

The Cytoplasmic segment spans residues 1 to 12; the sequence is MYTKEYYWFSQY. A helical transmembrane segment spans residues 13-33; it reads MIITSTLVLTIIWSILPSSLG. Residues 34–52 are Lumenal-facing; it reads EAAPKQFINTLLDIFPQRR. A helical membrane pass occupies residues 53–73; the sequence is WIITLESIMLMGMLCTYIGLL. At 74–140 the chain is on the cytoplasmic side; that stretch reads MYNEDTLTPP…YLYDNDHTST (67 aa).

Belongs to the GPI19 family. As to quaternary structure, component of the phosphatidylinositol N-acetylglucosaminyltransferase (GPI-GlcNAc transferase) complex composed of at least GPI1, GPI2, GPI3, GPI15, GPI19 and ERI1. Interacts with GPI2.

The protein resides in the endoplasmic reticulum membrane. The catalysed reaction is a 1,2-diacyl-sn-glycero-3-phospho-(1D-myo-inositol) + UDP-N-acetyl-alpha-D-glucosamine = a 6-(N-acetyl-alpha-D-glucosaminyl)-1-(1,2-diacyl-sn-glycero-3-phospho)-1D-myo-inositol + UDP + H(+). Its pathway is glycolipid biosynthesis; glycosylphosphatidylinositol-anchor biosynthesis. In terms of biological role, part of the complex catalyzing the transfer of N-acetylglucosamine from UDP-N-acetylglucosamine to phosphatidylinositol, the first step of GPI biosynthesis. Involved in cell wall biosynthesis. The sequence is that of Phosphatidylinositol N-acetylglucosaminyltransferase subunit GPI19 (GPI19) from Saccharomyces cerevisiae (strain ATCC 204508 / S288c) (Baker's yeast).